A 356-amino-acid chain; its full sequence is A-type ATP synthase subunit C (356 aa).

Belongs to the V-ATPase V0D/AC39 subunit family. In terms of assembly, has multiple subunits with at least A(3), B(3), C, D, E, F, H, I and proteolipid K(x).

The protein localises to the cell membrane. Its function is as follows. Component of the A-type ATP synthase that produces ATP from ADP in the presence of a proton gradient across the membrane. This chain is A-type ATP synthase subunit C, found in Thermoplasma acidophilum (strain ATCC 25905 / DSM 1728 / JCM 9062 / NBRC 15155 / AMRC-C165).